The chain runs to 165 residues: MDIALDLQSIAVQEKTLVFPQFDAARAWALGSQLREFALARGHAVAIDVRTFGQPLFFALVDGATPDNVDWARRKGNVVAHFRRSSYAIGLRLQQAGATLADKHGLPAAEYASHGGAFPIAVAGAGVIGSVTVSGLPQRGDHELVVEALCAQLGHAYATLALTGN.

This sequence belongs to the UPF0303 family.

The protein is UPF0303 protein BMA1246 of Burkholderia mallei (strain ATCC 23344).